A 309-amino-acid chain; its full sequence is Methionine synthase (309 aa).

Zn(2+)-binding residues include His-201, Cys-203, Glu-224, and Cys-285.

The protein belongs to the archaeal MetE family. Requires Zn(2+) as cofactor.

It functions in the pathway amino-acid biosynthesis; L-methionine biosynthesis via de novo pathway. With respect to regulation, is activated by phosphates. In terms of biological role, catalyzes the transfer of a methyl group to L-homocysteine resulting in methionine formation. Can use methylcobalamin and methylcobinamide as methyl donors, but methylcobalamin is not considered to be the physiological substrate. It was proposed that, in vivo, a so-far-unidentified enzyme catalyzes methyltransfer from 5-methyltetrahydromethanopterin (5-CH3-H4MPT) to a corrinoid protein, and that the MetE gene product catalyzes the further transfer to L-homocysteine. Is not active with L-cysteine, coenzyme M, coenzyme B, glutathione or dithiothreitol as substrate. This chain is Methionine synthase, found in Methanothermobacter marburgensis (strain ATCC BAA-927 / DSM 2133 / JCM 14651 / NBRC 100331 / OCM 82 / Marburg) (Methanobacterium thermoautotrophicum).